The chain runs to 226 residues: MTKRAIVLLSGGLDSATVLAMAKAQGFETYALSMRYGQRHSSELDAAKQVASALGAVRHEIVDLDLRRFGGSALTDDKLDVPTGGASSGIPITYVPARNTIMLSLALGWAEAVGGRDLFFGANAVDYSGYPDCRPEYVAAYETLANLATKAGVEGDRFHVHAPIIDMTKAEIIRAGIRLGVDYSMTVSCYKADDDGRACGVCDSCRIRRAGFEAAGVPDPTRYQNA.

Position 9–19 (9–19 (LSGGLDSATVL)) interacts with ATP. The Zn(2+) site is built by Cys189, Cys199, Cys202, and Cys205.

Belongs to the QueC family. Zn(2+) serves as cofactor.

It catalyses the reaction 7-carboxy-7-deazaguanine + NH4(+) + ATP = 7-cyano-7-deazaguanine + ADP + phosphate + H2O + H(+). It participates in purine metabolism; 7-cyano-7-deazaguanine biosynthesis. In terms of biological role, catalyzes the ATP-dependent conversion of 7-carboxy-7-deazaguanine (CDG) to 7-cyano-7-deazaguanine (preQ(0)). In Cupriavidus pinatubonensis (strain JMP 134 / LMG 1197) (Cupriavidus necator (strain JMP 134)), this protein is 7-cyano-7-deazaguanine synthase.